Consider the following 503-residue polypeptide: Betaine aldehyde dehydrogenase 2 (503 aa).

Residue Trp161–Trp170 coordinates betaine aldehyde. Residue Gly238–Gly243 coordinates NAD(+). Betaine aldehyde contacts are provided by residues Glu260, Gln292–Ser295, and Cys453. Catalysis depends on residues Glu260 and Cys294. Residues Glu260–Leu261 and Cys294 contribute to the 4-aminobutanal site. Position 459 (Trp459) interacts with 4-aminobutanal. The short motif at Ser501–Leu503 is the Microbody targeting signal element.

It belongs to the aldehyde dehydrogenase family. Homodimer.

The protein resides in the peroxisome. The protein localises to the cytoplasm. It catalyses the reaction betaine aldehyde + NAD(+) + H2O = glycine betaine + NADH + 2 H(+). It functions in the pathway amine and polyamine biosynthesis; betaine biosynthesis via choline pathway; betaine from betaine aldehyde: step 1/1. In terms of biological role, dehydrogenase that can use N-acetyl-c-aminobutyraldehyde (NAGABald), gamma-guanidinobutyraldehyde (GGBald), betaine aldehyde (Bet-ald), gamma-aminobutyraldehyde (GAB-ald), acetaldehyde, 4-aminobutylaldehyde (AB-ald), 3-aminopropionaldehyde (AP-ald), 4-N-trimethylaminobutyraldehyde (TMAB-ald) and 3-N-trimethylaminopropionaldehyde (TMAP-ald) as substrates. Catalyzes the oxidation of GAB-ald more efficiently than Bet-ald. Mediates the conversion of GAB-ald into gamma-aminobutyric acid (GABA), and prevents the formation of 2-acetyl-1-pyrroline (2AP) which gives fragrant rice its aromatic properties. The polypeptide is Betaine aldehyde dehydrogenase 2 (BADH2) (Oryza sativa subsp. indica (Rice)).